Reading from the N-terminus, the 362-residue chain is Protein indeterminate-domain 16 (362 aa).

The segment at 1–22 (MELTQPIRENGDPQGHQLTDPD) is disordered. 2 C2H2-type zinc fingers span residues 39 to 61 (YVCE…RRRH) and 82 to 112 (YVCP…RRKH). Residues 118–142 (WVCERCSKGYAVQSDYKAHLKTCGS) form a CCHC-type 1; atypical zinc finger. Zn(2+)-binding residues include C120, C123, H136, C140, C147, C149, H162, and C166. The segment at 145–168 (HSCDCGRVFSRVESFIEHQDTCTI) adopts a CCHC-type 2; atypical zinc-finger fold. Residues 155–167 (RVESFIEHQDTCT) form an SHR-binding region. The tract at residues 247–278 (SAQARHNEKRETSLTKERANEEARKAEETRQE) is disordered. Residues 251-278 (RHNEKRETSLTKERANEEARKAEETRQE) are compositionally biased toward basic and acidic residues. Residues 252–319 (HNEKRETSLT…VREEAIKRIN (68 aa)) are a coiled coil.

Highly expressed in leaves, hypocotyls, roots, vasculature of cotyledons, floral organs and in the endodermis and vasculaturenof inflorescence stems.

The protein resides in the nucleus. In terms of biological role, transcription factor regulating lateral organ morphogenesis and gravitropic responses. Has a redundant role with IDD14 in directing leaf and floral organ morphogenesis. Acts cooperatively with IDD15 to control silique and branche orientation. Involved in the establishment of auxin gradients through the regulation of auxin biosynthesis and transport. The polypeptide is Protein indeterminate-domain 16 (Arabidopsis thaliana (Mouse-ear cress)).